Reading from the N-terminus, the 302-residue chain is Sulfate adenylyltransferase subunit 2 (302 aa).

Belongs to the PAPS reductase family. CysD subfamily. Heterodimer composed of CysD, the smaller subunit, and CysN.

The catalysed reaction is sulfate + ATP + H(+) = adenosine 5'-phosphosulfate + diphosphate. It functions in the pathway sulfur metabolism; hydrogen sulfide biosynthesis; sulfite from sulfate: step 1/3. With CysN forms the ATP sulfurylase (ATPS) that catalyzes the adenylation of sulfate producing adenosine 5'-phosphosulfate (APS) and diphosphate, the first enzymatic step in sulfur assimilation pathway. APS synthesis involves the formation of a high-energy phosphoric-sulfuric acid anhydride bond driven by GTP hydrolysis by CysN coupled to ATP hydrolysis by CysD. This Escherichia coli O6:K15:H31 (strain 536 / UPEC) protein is Sulfate adenylyltransferase subunit 2.